The chain runs to 471 residues: Pneumolysin (471 aa).

Transmembrane regions (beta stranded) follow at residues 158-171 (MEQL…DFEK), 178-187 (IDFNSVHSGE), 256-265 (SDEVEAAFEA), and 273-285 (APQT…LDNT). The Conserved undecapeptide motif lies at 427–437 (ECTGLAWEWWR). The Cholesterol binding motif lies at 459-460 (TL).

The protein belongs to the cholesterol-dependent cytolysin family. As to quaternary structure, elongated monomers align along their lengths, indicating intersubunit contacts and suggesting the prepore structure. Modeling based on cryo-EM shows a homooligomeric pore complex containing 38-44 subunits; when inserted in the host membrane. The size of isolated pores is detergent-dependent; in amphipol A8-35 homogenous rings form with 42 subunits.

The protein localises to the secreted. Its subcellular location is the host cell membrane. Erythrocytes hemolysis is inhibited by cholesterol. In terms of biological role, a cholesterol-dependent toxin that causes cytolysis by forming pores in cholesterol-containing host membranes. After binding to target membranes, the protein undergoes a major conformation change, leading to its insertion in the host membrane and formation of an oligomeric pore complex. Cholesterol is required for binding to host membranes, membrane insertion and pore formation; cholesterol binding is mediated by a Thr-Leu pair in the C-terminus. Can be reversibly inactivated by oxidation. This Streptococcus pneumoniae serotype 2 (strain D39 / NCTC 7466) protein is Pneumolysin (ply).